The following is a 27-amino-acid chain: Putative phosphoglycerate kinase (27 aa).

The protein belongs to the phosphoglycerate kinase family. As to quaternary structure, monomer. Requires Mg(2+) as cofactor.

The enzyme catalyses (2R)-3-phosphoglycerate + ATP = (2R)-3-phospho-glyceroyl phosphate + ADP. The sequence is that of Putative phosphoglycerate kinase from Pinus strobus (Eastern white pine).